A 536-amino-acid polypeptide reads, in one-letter code: Membrane protein insertase YidC (536 aa).

A helical membrane pass occupies residues 7 to 27; that stretch reads IIAVVLSLFVLIGWSYLSEFM. The interval 43–70 is disordered; that stretch reads VQQKASEPVAQPVQTASAPAASSFAPTE. The segment covering 58–68 has biased composition (low complexity); that stretch reads ASAPAASSFAP. 3 helical membrane-spanning segments follow: residues 346-366, 415-435, and 495-515; these read GNYG…FWPL, GGCL…QGLL, and IMMF…AGLV.

It belongs to the OXA1/ALB3/YidC family. Type 1 subfamily. Interacts with the Sec translocase complex via SecD. Specifically interacts with transmembrane segments of nascent integral membrane proteins during membrane integration.

It is found in the cell inner membrane. Its function is as follows. Required for the insertion and/or proper folding and/or complex formation of integral membrane proteins into the membrane. Involved in integration of membrane proteins that insert both dependently and independently of the Sec translocase complex, as well as at least some lipoproteins. Aids folding of multispanning membrane proteins. The sequence is that of Membrane protein insertase YidC from Oleidesulfovibrio alaskensis (strain ATCC BAA-1058 / DSM 17464 / G20) (Desulfovibrio alaskensis).